Reading from the N-terminus, the 601-residue chain is Elongation factor 4 (601 aa).

Residues 7–189 (RNIRNFSIIA…AIVHRIPPPK (183 aa)) enclose the tr-type G domain. Residues 19–24 (DHGKST) and 136–139 (NKID) each bind GTP.

The protein belongs to the TRAFAC class translation factor GTPase superfamily. Classic translation factor GTPase family. LepA subfamily.

It localises to the cell inner membrane. The enzyme catalyses GTP + H2O = GDP + phosphate + H(+). In terms of biological role, required for accurate and efficient protein synthesis under certain stress conditions. May act as a fidelity factor of the translation reaction, by catalyzing a one-codon backward translocation of tRNAs on improperly translocated ribosomes. Back-translocation proceeds from a post-translocation (POST) complex to a pre-translocation (PRE) complex, thus giving elongation factor G a second chance to translocate the tRNAs correctly. Binds to ribosomes in a GTP-dependent manner. This Xanthomonas campestris pv. campestris (strain ATCC 33913 / DSM 3586 / NCPPB 528 / LMG 568 / P 25) protein is Elongation factor 4.